A 437-amino-acid chain; its full sequence is ATP-dependent RNA helicase RhlB (437 aa).

Positions 9–37 match the Q motif motif; the sequence is QKFADLGLQPQVTEGLEKKGFEYCTPIQA. Residues 40–219 form the Helicase ATP-binding domain; the sequence is LPVLLTGQDI…FEHMHNPEHV (180 aa). An ATP-binding site is contributed by 53 to 60; the sequence is AQTGTGKT. Positions 165–168 match the DEAD box motif; that stretch reads DEAD. The region spanning 245–390 is the Helicase C-terminal domain; that stretch reads ALLQTLIEEE…VSEYDASALI (146 aa). Residues 397 to 437 form a disordered region; that stretch reads IRMRAPRVQQRRTNTGGTRSGNRKPQGRRPRQPRQSAPKQS. Basic residues predominate over residues 417–428; sequence GNRKPQGRRPRQ.

Belongs to the DEAD box helicase family. RhlB subfamily. In terms of assembly, component of the RNA degradosome, which is a multiprotein complex involved in RNA processing and mRNA degradation.

The protein resides in the cytoplasm. It carries out the reaction ATP + H2O = ADP + phosphate + H(+). Its function is as follows. DEAD-box RNA helicase involved in RNA degradation. Has RNA-dependent ATPase activity and unwinds double-stranded RNA. This Vibrio parahaemolyticus serotype O3:K6 (strain RIMD 2210633) protein is ATP-dependent RNA helicase RhlB.